We begin with the raw amino-acid sequence, 120 residues long: Glycine cleavage system H protein (120 aa).

Residues 17–99 form the Lipoyl-binding domain; that stretch reads VATVGITNYA…QGAGWFFKLK (83 aa). Residue K58 is modified to N6-lipoyllysine.

The protein belongs to the GcvH family. The glycine cleavage system is composed of four proteins: P, T, L and H. (R)-lipoate serves as cofactor.

In terms of biological role, the glycine cleavage system catalyzes the degradation of glycine. The H protein shuttles the methylamine group of glycine from the P protein to the T protein. The protein is Glycine cleavage system H protein of Rhizobium leguminosarum bv. trifolii (strain WSM2304).